Consider the following 461-residue polypeptide: Cysteine--tRNA ligase (461 aa).

A Zn(2+)-binding site is contributed by C28. The short motif at 30 to 40 is the 'HIGH' region element; the sequence is ITVYDLCHIGH. Zn(2+) is bound by residues C209, H234, and E238. The 'KMSKS' region motif lies at 266–270; it reads KMSKS. K269 provides a ligand contact to ATP.

The protein belongs to the class-I aminoacyl-tRNA synthetase family. Monomer. Zn(2+) is required as a cofactor.

The protein resides in the cytoplasm. The enzyme catalyses tRNA(Cys) + L-cysteine + ATP = L-cysteinyl-tRNA(Cys) + AMP + diphosphate. In Escherichia coli (strain 55989 / EAEC), this protein is Cysteine--tRNA ligase.